We begin with the raw amino-acid sequence, 350 residues long: Arabinogalactan endo-beta-1,4-galactanase (350 aa).

Positions 1 to 16 (MFASLLLAALPLLTHA) are cleaved as a signal peptide. A glycan (N-linked (GlcNAc...) asparagine) is linked at N128. E152 (proton donor) is an active-site residue. E262 serves as the catalytic Nucleophile.

This sequence belongs to the glycosyl hydrolase 53 family. Glycosylated.

It carries out the reaction The enzyme specifically hydrolyzes (1-&gt;4)-beta-D-galactosidic linkages in type I arabinogalactans.. In Aspergillus aculeatus, this protein is Arabinogalactan endo-beta-1,4-galactanase (gal1).